Reading from the N-terminus, the 357-residue chain is UDP-N-acetylglucosamine--N-acetylmuramyl-(pentapeptide) pyrophosphoryl-undecaprenol N-acetylglucosamine transferase (357 aa).

UDP-N-acetyl-alpha-D-glucosamine-binding positions include 13-15, N125, R161, S189, I243, and Q288; that span reads TGG.

It belongs to the glycosyltransferase 28 family. MurG subfamily.

Its subcellular location is the cell inner membrane. It catalyses the reaction di-trans,octa-cis-undecaprenyl diphospho-N-acetyl-alpha-D-muramoyl-L-alanyl-D-glutamyl-meso-2,6-diaminopimeloyl-D-alanyl-D-alanine + UDP-N-acetyl-alpha-D-glucosamine = di-trans,octa-cis-undecaprenyl diphospho-[N-acetyl-alpha-D-glucosaminyl-(1-&gt;4)]-N-acetyl-alpha-D-muramoyl-L-alanyl-D-glutamyl-meso-2,6-diaminopimeloyl-D-alanyl-D-alanine + UDP + H(+). Its pathway is cell wall biogenesis; peptidoglycan biosynthesis. Cell wall formation. Catalyzes the transfer of a GlcNAc subunit on undecaprenyl-pyrophosphoryl-MurNAc-pentapeptide (lipid intermediate I) to form undecaprenyl-pyrophosphoryl-MurNAc-(pentapeptide)GlcNAc (lipid intermediate II). This is UDP-N-acetylglucosamine--N-acetylmuramyl-(pentapeptide) pyrophosphoryl-undecaprenol N-acetylglucosamine transferase from Bordetella parapertussis (strain 12822 / ATCC BAA-587 / NCTC 13253).